Here is a 262-residue protein sequence, read N- to C-terminus: Carboxy-S-adenosyl-L-methionine synthase (262 aa).

S-adenosyl-L-methionine-binding positions include Tyr50, 84-86 (GCS), 137-138 (DI), Asn152, and Arg219.

The protein belongs to the class I-like SAM-binding methyltransferase superfamily. Cx-SAM synthase family. As to quaternary structure, homodimer.

It catalyses the reaction prephenate + S-adenosyl-L-methionine = carboxy-S-adenosyl-L-methionine + 3-phenylpyruvate + H2O. Its function is as follows. Catalyzes the conversion of S-adenosyl-L-methionine (SAM) to carboxy-S-adenosyl-L-methionine (Cx-SAM). In Psychrobacter arcticus (strain DSM 17307 / VKM B-2377 / 273-4), this protein is Carboxy-S-adenosyl-L-methionine synthase.